A 462-amino-acid chain; its full sequence is ATP synthase subunit beta 1 (462 aa).

An ATP-binding site is contributed by 152 to 159 (GGAGVGKT).

This sequence belongs to the ATPase alpha/beta chains family. As to quaternary structure, F-type ATPases have 2 components, CF(1) - the catalytic core - and CF(0) - the membrane proton channel. CF(1) has five subunits: alpha(3), beta(3), gamma(1), delta(1), epsilon(1). CF(0) has four main subunits: a(1), b(1), b'(1) and c(9-12).

The protein resides in the cell inner membrane. The enzyme catalyses ATP + H2O + 4 H(+)(in) = ADP + phosphate + 5 H(+)(out). Produces ATP from ADP in the presence of a proton gradient across the membrane. The catalytic sites are hosted primarily by the beta subunits. The protein is ATP synthase subunit beta 1 of Dinoroseobacter shibae (strain DSM 16493 / NCIMB 14021 / DFL 12).